A 356-amino-acid chain; its full sequence is Trifolitoxin operon protein TfxC (356 aa).

The sequence is that of Trifolitoxin operon protein TfxC (tfxC) from Rhizobium leguminosarum bv. trifolii.